Consider the following 281-residue polypeptide: Ribosomal RNA small subunit methyltransferase I (281 aa).

This sequence belongs to the methyltransferase superfamily. RsmI family.

It localises to the cytoplasm. The enzyme catalyses cytidine(1402) in 16S rRNA + S-adenosyl-L-methionine = 2'-O-methylcytidine(1402) in 16S rRNA + S-adenosyl-L-homocysteine + H(+). In terms of biological role, catalyzes the 2'-O-methylation of the ribose of cytidine 1402 (C1402) in 16S rRNA. The protein is Ribosomal RNA small subunit methyltransferase I of Erythrobacter litoralis (strain HTCC2594).